A 301-amino-acid chain; its full sequence is Quinolinate synthase (301 aa).

Iminosuccinate-binding residues include histidine 21 and serine 38. Position 83 (cysteine 83) interacts with [4Fe-4S] cluster. Iminosuccinate contacts are provided by residues tyrosine 109–asparagine 111 and serine 126. A [4Fe-4S] cluster-binding site is contributed by cysteine 169. Residues histidine 195–glutamate 197 and threonine 212 each bind iminosuccinate. Cysteine 257 lines the [4Fe-4S] cluster pocket.

This sequence belongs to the quinolinate synthase family. Type 2 subfamily. Requires [4Fe-4S] cluster as cofactor.

It localises to the cytoplasm. The catalysed reaction is iminosuccinate + dihydroxyacetone phosphate = quinolinate + phosphate + 2 H2O + H(+). Its pathway is cofactor biosynthesis; NAD(+) biosynthesis; quinolinate from iminoaspartate: step 1/1. Catalyzes the condensation of iminoaspartate with dihydroxyacetone phosphate to form quinolinate. This is Quinolinate synthase from Clostridium perfringens (strain ATCC 13124 / DSM 756 / JCM 1290 / NCIMB 6125 / NCTC 8237 / Type A).